We begin with the raw amino-acid sequence, 124 residues long: Small ribosomal subunit protein uS12 (124 aa).

A disordered region spans residues 1 to 24 (MPTISQLVRKGRAKITKKSKSAAL). Basic residues predominate over residues 9–20 (RKGRAKITKKSK). Residue Asp-89 is modified to 3-methylthioaspartic acid. The segment at 105–124 (AGVEGRTQRRSKYGAKRPKK) is disordered. A compositionally biased stretch (basic residues) spans 112–124 (QRRSKYGAKRPKK).

It belongs to the universal ribosomal protein uS12 family. As to quaternary structure, part of the 30S ribosomal subunit. Contacts proteins S8 and S17. May interact with IF1 in the 30S initiation complex.

Functionally, with S4 and S5 plays an important role in translational accuracy. Its function is as follows. Interacts with and stabilizes bases of the 16S rRNA that are involved in tRNA selection in the A site and with the mRNA backbone. Located at the interface of the 30S and 50S subunits, it traverses the body of the 30S subunit contacting proteins on the other side and probably holding the rRNA structure together. The combined cluster of proteins S8, S12 and S17 appears to hold together the shoulder and platform of the 30S subunit. In Christiangramia forsetii (strain DSM 17595 / CGMCC 1.15422 / KT0803) (Gramella forsetii), this protein is Small ribosomal subunit protein uS12.